An 89-amino-acid polypeptide reads, in one-letter code: Large ribosomal subunit protein eL34 (89 aa).

The segment at 1-29 is disordered; that stretch reads MSAPRFRNGTFKRTLKRVPGGRKVEHYKK. Residues 13 to 29 show a composition bias toward basic residues; that stretch reads RTLKRVPGGRKVEHYKK.

The protein belongs to the eukaryotic ribosomal protein eL34 family.

The protein is Large ribosomal subunit protein eL34 of Methanosphaera stadtmanae (strain ATCC 43021 / DSM 3091 / JCM 11832 / MCB-3).